The following is a 146-amino-acid chain: MTQRFKQLETAAQGTREATRDLLDAARWNDAGLIPAIAQQHDSGEVLMMAWMNRAALEETLATGRVCYWSRSRGKPWRKGESSGQVQQLVTAHLDCDGDTLLLGVDQQGPACHTGRRSCFYVALGADTAHVDSAPLVDPHELYGER.

D95 contacts Mg(2+). Position 96 (C96) interacts with Zn(2+). Mg(2+) is bound by residues D97 and D99. Zn(2+) contacts are provided by C112 and C119.

The protein belongs to the PRA-CH family. Homodimer. Requires Mg(2+) as cofactor. Zn(2+) serves as cofactor.

It localises to the cytoplasm. The enzyme catalyses 1-(5-phospho-beta-D-ribosyl)-5'-AMP + H2O = 1-(5-phospho-beta-D-ribosyl)-5-[(5-phospho-beta-D-ribosylamino)methylideneamino]imidazole-4-carboxamide. Its pathway is amino-acid biosynthesis; L-histidine biosynthesis; L-histidine from 5-phospho-alpha-D-ribose 1-diphosphate: step 3/9. Catalyzes the hydrolysis of the adenine ring of phosphoribosyl-AMP. The polypeptide is Phosphoribosyl-AMP cyclohydrolase (Chromohalobacter salexigens (strain ATCC BAA-138 / DSM 3043 / CIP 106854 / NCIMB 13768 / 1H11)).